The primary structure comprises 280 residues: Putative aquaporin-10 (280 aa).

Over 1-8 the chain is Cytoplasmic; it reads MEAVSSEY. The chain crosses the membrane as a helical span at residues 9–29; the sequence is YFPLYSALGYFALVFGIGEIA. The Extracellular portion of the chain corresponds to 30–64; that stretch reads RIITAKYVSPRGNSQLFLYELIGTIQMCTCVYENG. A helical transmembrane segment spans residues 65–85; sequence IIFKNYGFPAIFICVALLLTA. Residues 86–114 lie on the Cytoplasmic side of the membrane; that stretch reads GNIFNRGAMTNCAPIFEQFVFGNLGSSKF. A helical membrane pass occupies residues 115–135; sequence LTILSAQLIGATFASKFAYLI. At 136–164 the chain is on the extracellular side; it reads WNITAPYSTAHLENASNLECILHYKQTAG. A helical transmembrane segment spans residues 165-185; that stretch reads IVIGFEIVGAFVVRIVVAQLL. The Cytoplasmic portion of the chain corresponds to 186–193; sequence ARPALIKL. Residues 194–214 form a helical membrane-spanning segment; the sequence is IPFAISAYLSLALYVVGVPGL. The Extracellular segment spans residues 215-233; sequence NPIVATARLYGCRGIDNSS. A helical transmembrane segment spans residues 234 to 254; that stretch reads FFILYWFCPVLGWLTGAYVVG. At 255-280 the chain is on the cytoplasmic side; it reads QKSPSKKSAKDVKAEKKAKAAAKKSD. A disordered region spans residues 256 to 280; it reads KSPSKKSAKDVKAEKKAKAAAKKSD. Residues 262 to 280 are compositionally biased toward basic and acidic residues; the sequence is SAKDVKAEKKAKAAAKKSD.

This sequence belongs to the MIP/aquaporin (TC 1.A.8) family.

The protein localises to the membrane. This chain is Putative aquaporin-10 (aqp-10), found in Caenorhabditis elegans.